Here is a 192-residue protein sequence, read N- to C-terminus: Ribose 1,5-bisphosphate phosphokinase PhnN (192 aa).

15-22 (GPSGAGKD) is a binding site for ATP.

The protein belongs to the ribose 1,5-bisphosphokinase family.

The enzyme catalyses alpha-D-ribose 1,5-bisphosphate + ATP = 5-phospho-alpha-D-ribose 1-diphosphate + ADP. Its pathway is metabolic intermediate biosynthesis; 5-phospho-alpha-D-ribose 1-diphosphate biosynthesis; 5-phospho-alpha-D-ribose 1-diphosphate from D-ribose 5-phosphate (route II): step 3/3. Its function is as follows. Catalyzes the phosphorylation of ribose 1,5-bisphosphate to 5-phospho-D-ribosyl alpha-1-diphosphate (PRPP). The sequence is that of Ribose 1,5-bisphosphate phosphokinase PhnN from Brucella abortus biovar 1 (strain 9-941).